A 325-amino-acid chain; its full sequence is Hydroxylase/desaturase poxK (325 aa).

Residues 1–12 (MTATATPVPTVA) show a composition bias toward low complexity. The interval 1–25 (MTATATPVPTVASHAQDITLPPPPK) is disordered.

This sequence belongs to the asaB hydroxylase/desaturase family.

Its pathway is secondary metabolite biosynthesis. Hydroxylase/desaturase; part of the gene cluster that mediates the biosynthesis of oxaleimides, cytotoxic compounds containing an unusual disubstituted succinimide moiety. The first step of the pathway is provided by the HR-PKS poxF that serves in a new mode of collaborative biosynthesis with the PKS-NRPS poxE, by providing the olefin containing amino acid substrate via the synthesis of an ACP-bound dec-4-enoate. The cytochrome P450 monooxygenase poxM-catalyzed oxidation at the alpha-position creates the enzyme-bound 2-hydroxydec-4-enoyl-ACP thioester, which may be prone to spontaneous hydrolysis to yield 2-hydroxydec-4-enoic acid due to increased electrophilicity of the carbonyl. 2-hydroxydec-4-enoic acid can then be further oxidized by poxM to yield the alpha-ketoacid 2-oxodec-4-enoicacid, which is reductively aminated by the aminotransferase poxL to yield (S,E)-2-aminodec-4-enoic acid. The Hybrid PKS-NRPS synthetase poxE then performs condensation between the octaketide product of its PKS modules and the amino group of (S,E)-2-aminodec-4-enoic acid which is activated and incorporated by the adenylation domain. The resulting aminoacyl product can be cyclized by the Diels-Alderase PoxQ and reductively released by the reductive (R) domain of poxE to yield an aldehyde intermediate. The released aldehyde is then substrate for a Knoevenagel condensation by the hydrolyase poxO followed by an oxidation at the 5-position of the pyrrolidone ring. The presence of the olefin from the amino acid building block allows for migration of the substituted allyl group to occur. This allylic transposition reaction takes place in a conjugate addition, semipinacol-like fashion to yield a succinimide intermediate. Iterative two-electron oxidations of the C7 methyl of the succinimide intermediate to the carboxylic acid can be catalyzed by one of two remaining cytochrome P450 monooxygenasess poxC or poxD to yield oxaleimide A. Subsequent oxidation yields the maleimide scaffold oxaleimide I. Both oxaleimide A and oxaleimide I can undergo oxidative modifications in the decalin ring to yield the series of products oxaleimides B to H. The sequence is that of Hydroxylase/desaturase poxK from Penicillium oxalicum (strain 114-2 / CGMCC 5302) (Penicillium decumbens).